Reading from the N-terminus, the 578-residue chain is E3 ubiquitin-protein ligase hrd-like protein 1 (578 aa).

Residues 32–52 (GYLALSLCVAFIASASVFTHF) traverse the membrane as a helical segment. N-linked (GlcNAc...) asparagine glycosylation occurs at asparagine 68. Helical transmembrane passes span 76–96 (FGINIDTIAGSTVFQMAHYIL), 101–121 (LIWVAINSYFAILAMCTKLII), 134–154 (VAARQAFLSYILLTIVYLSVV), 163–183 (VMPWMIWGGVCGFLSHLQFVT), 202–222 (SFISLFLFFVSIAMTFMVSRF), 230–250 (PAVLLYFDCLLAVFRSTYILF), and 286–306 (FLSYAQLFVFAPGLNLTSIFF). An RING-type; atypical zinc finger spans residues 350–388 (CIVCWELLGTSRRLPCSHQFHDWCLMWWLAQDSSCPTCR). Positions 447–489 (QLQSMLETVLEMFPQMSPETILADLRQSGSAQSTIENILEGRM) constitute a CUE domain. Asparagine 492 carries N-linked (GlcNAc...) asparagine glycosylation.

The protein resides in the membrane. In terms of biological role, proposed to have a role in neuroprotection. This Caenorhabditis briggsae protein is E3 ubiquitin-protein ligase hrd-like protein 1.